A 428-amino-acid chain; its full sequence is Cysteine--tRNA ligase (428 aa).

Cysteine 23 provides a ligand contact to Zn(2+). The 'HIGH' region motif lies at 25–35; that stretch reads PTVYNDLHLGN. Zn(2+)-binding residues include cysteine 196, histidine 221, and glutamate 225. Residues 253-257 carry the 'KMSKS' region motif; that stretch reads KMSKS. Lysine 256 contributes to the ATP binding site.

It belongs to the class-I aminoacyl-tRNA synthetase family. In terms of assembly, monomer. Requires Zn(2+) as cofactor.

It localises to the cytoplasm. It carries out the reaction tRNA(Cys) + L-cysteine + ATP = L-cysteinyl-tRNA(Cys) + AMP + diphosphate. The sequence is that of Cysteine--tRNA ligase (cysS) from Mycoplasma genitalium (strain ATCC 33530 / DSM 19775 / NCTC 10195 / G37) (Mycoplasmoides genitalium).